A 550-amino-acid chain; its full sequence is Chaperonin GroEL (550 aa).

ATP-binding positions include 30–33 (TLGP), Lys51, 87–91 (DGTTT), Gly415, 479–481 (NAA), and Asp495.

This sequence belongs to the chaperonin (HSP60) family. In terms of assembly, forms a cylinder of 14 subunits composed of two heptameric rings stacked back-to-back. Interacts with the co-chaperonin GroES.

It localises to the cytoplasm. The catalysed reaction is ATP + H2O + a folded polypeptide = ADP + phosphate + an unfolded polypeptide.. Functionally, together with its co-chaperonin GroES, plays an essential role in assisting protein folding. The GroEL-GroES system forms a nano-cage that allows encapsulation of the non-native substrate proteins and provides a physical environment optimized to promote and accelerate protein folding. This chain is Chaperonin GroEL, found in Polynucleobacter asymbioticus (strain DSM 18221 / CIP 109841 / QLW-P1DMWA-1) (Polynucleobacter necessarius subsp. asymbioticus).